The primary structure comprises 61 residues: uncharacterized protein (61 aa).

The disordered stretch occupies residues 39 to 61 (PRPFTPGLADPRRLGPRRVQAAQ).

This is an uncharacterized protein from Pan troglodytes (Chimpanzee).